A 185-amino-acid chain; its full sequence is HTH-type transcriptional regulator SAB2452 (185 aa).

Residues 6–66 (IENRQRIEEI…YVIQRDLNTF (61 aa)) enclose the HTH tetR-type domain. A DNA-binding region (H-T-H motif) is located at residues 29 to 48 (SMNRIAKELGIGMGTLYRHF).

This chain is HTH-type transcriptional regulator SAB2452, found in Staphylococcus aureus (strain bovine RF122 / ET3-1).